The sequence spans 355 residues: Phosphoribosylformylglycinamidine cyclo-ligase (355 aa).

This sequence belongs to the AIR synthase family.

It is found in the cytoplasm. It carries out the reaction 2-formamido-N(1)-(5-O-phospho-beta-D-ribosyl)acetamidine + ATP = 5-amino-1-(5-phospho-beta-D-ribosyl)imidazole + ADP + phosphate + H(+). Its pathway is purine metabolism; IMP biosynthesis via de novo pathway; 5-amino-1-(5-phospho-D-ribosyl)imidazole from N(2)-formyl-N(1)-(5-phospho-D-ribosyl)glycinamide: step 2/2. This Beijerinckia indica subsp. indica (strain ATCC 9039 / DSM 1715 / NCIMB 8712) protein is Phosphoribosylformylglycinamidine cyclo-ligase.